A 124-amino-acid polypeptide reads, in one-letter code: Large ribosomal subunit protein bL12 (124 aa).

The protein belongs to the bacterial ribosomal protein bL12 family. In terms of assembly, homodimer. Part of the ribosomal stalk of the 50S ribosomal subunit. Forms a multimeric L10(L12)X complex, where L10 forms an elongated spine to which 2 to 4 L12 dimers bind in a sequential fashion. Binds GTP-bound translation factors.

Forms part of the ribosomal stalk which helps the ribosome interact with GTP-bound translation factors. Is thus essential for accurate translation. The sequence is that of Large ribosomal subunit protein bL12 from Leptothrix cholodnii (strain ATCC 51168 / LMG 8142 / SP-6) (Leptothrix discophora (strain SP-6)).